A 266-amino-acid chain; its full sequence is Regulatory protein RecX (266 aa).

Belongs to the RecX family.

Its subcellular location is the cytoplasm. Functionally, modulates RecA activity. The chain is Regulatory protein RecX from Enterococcus faecalis (strain ATCC 700802 / V583).